The chain runs to 431 residues: Serine hydroxymethyltransferase (431 aa).

122–124 (GHI) serves as a coordination point for (6S)-5,6,7,8-tetrahydrofolate. Lys-228 is subject to N6-(pyridoxal phosphate)lysine. Glu-245 is a binding site for (6S)-5,6,7,8-tetrahydrofolate.

It belongs to the SHMT family. As to quaternary structure, homodimer. Requires pyridoxal 5'-phosphate as cofactor.

The protein resides in the cytoplasm. The protein operates within amino-acid biosynthesis; glycine biosynthesis; glycine from L-serine: step 1/1. Functionally, catalyzes the reversible interconversion of serine and glycine with a modified folate serving as the one-carbon carrier. Also exhibits a pteridine-independent aldolase activity toward beta-hydroxyamino acids, producing glycine and aldehydes, via a retro-aldol mechanism. The chain is Serine hydroxymethyltransferase from Thermococcus kodakarensis (strain ATCC BAA-918 / JCM 12380 / KOD1) (Pyrococcus kodakaraensis (strain KOD1)).